We begin with the raw amino-acid sequence, 313 residues long: Ribosomal RNA small subunit methyltransferase H (313 aa).

S-adenosyl-L-methionine-binding positions include 34–36, D55, F82, D103, and Q110; that span reads GGH.

This sequence belongs to the methyltransferase superfamily. RsmH family.

The protein resides in the cytoplasm. It carries out the reaction cytidine(1402) in 16S rRNA + S-adenosyl-L-methionine = N(4)-methylcytidine(1402) in 16S rRNA + S-adenosyl-L-homocysteine + H(+). Its function is as follows. Specifically methylates the N4 position of cytidine in position 1402 (C1402) of 16S rRNA. This Pelobacter propionicus (strain DSM 2379 / NBRC 103807 / OttBd1) protein is Ribosomal RNA small subunit methyltransferase H.